The following is an 85-amino-acid chain: Beta-mammal/insect toxin Lqhb1 (85 aa).

Positions 1–19 (MKIIIFLIVSSLMLIGVKT) are cleaved as a signal peptide. Positions 20–82 (DNGYLLNKAT…LWAYATNKCN (63 aa)) constitute an LCN-type CS-alpha/beta domain. Intrachain disulfides connect Cys31–Cys81, Cys35–Cys56, Cys42–Cys63, and Cys46–Cys65.

The protein belongs to the long (4 C-C) scorpion toxin superfamily. Sodium channel inhibitor family. Expressed by the venom gland.

The protein localises to the secreted. Functionally, beta toxins bind voltage-independently at site-4 of sodium channels (Nav) and shift the voltage of activation toward more negative potentials thereby affecting sodium channel activation and promoting spontaneous and repetitive firing. Competes, with apparent high affinity, with anti-insect and anti-mammalian beta-toxins for binding to cockroach and rat brain synaptosomes, respectively. Also competes with an anti-mammalian alpha-toxin on binding to rat brain sodium channels. Has a weak effect on cardiac sodium channels and a marked effect on rat brain and skeletal muscle sodium channels. This is Beta-mammal/insect toxin Lqhb1 from Leiurus hebraeus (Hebrew deathstalker scorpion).